We begin with the raw amino-acid sequence, 511 residues long: Chromosomal replication initiator protein DnaA (511 aa).

Residues 1-90 (MSVELWQQCV…KRSSAPRAAP (90 aa)) are domain I, interacts with DnaA modulators. The domain II stretch occupies residues 91-174 (NAPLAAAASQ…QVEGALKHTS (84 aa)). The tract at residues 133–162 (VAAHDEPSRDSFDPMAGASSQQAPARAEQR) is disordered. Residues 135-144 (AHDEPSRDSF) show a composition bias toward basic and acidic residues. The domain III, AAA+ region stretch occupies residues 175–391 (YLNRTFTFEN…GALKRVIAHS (217 aa)). ATP contacts are provided by glycine 219, glycine 221, lysine 222, and threonine 223. A domain IV, binds dsDNA region spans residues 392-511 (HFMGRDITIE…YKNLLRTLTT (120 aa)).

It belongs to the DnaA family. Oligomerizes as a right-handed, spiral filament on DNA at oriC.

The protein localises to the cytoplasm. Plays an essential role in the initiation and regulation of chromosomal replication. ATP-DnaA binds to the origin of replication (oriC) to initiate formation of the DNA replication initiation complex once per cell cycle. Binds the DnaA box (a 9 base pair repeat at the origin) and separates the double-stranded (ds)DNA. Forms a right-handed helical filament on oriC DNA; dsDNA binds to the exterior of the filament while single-stranded (ss)DNA is stabiized in the filament's interior. The ATP-DnaA-oriC complex binds and stabilizes one strand of the AT-rich DNA unwinding element (DUE), permitting loading of DNA polymerase. After initiation quickly degrades to an ADP-DnaA complex that is not apt for DNA replication. Binds acidic phospholipids. The polypeptide is Chromosomal replication initiator protein DnaA (Pseudomonas savastanoi pv. phaseolicola (strain 1448A / Race 6) (Pseudomonas syringae pv. phaseolicola (strain 1448A / Race 6))).